The chain runs to 160 residues: Ribosomal RNA large subunit methyltransferase H (160 aa).

Residues L76, G108, and L127 to W132 each bind S-adenosyl-L-methionine.

The protein belongs to the RNA methyltransferase RlmH family. Homodimer.

It is found in the cytoplasm. It catalyses the reaction pseudouridine(1915) in 23S rRNA + S-adenosyl-L-methionine = N(3)-methylpseudouridine(1915) in 23S rRNA + S-adenosyl-L-homocysteine + H(+). Its function is as follows. Specifically methylates the pseudouridine at position 1915 (m3Psi1915) in 23S rRNA. The polypeptide is Ribosomal RNA large subunit methyltransferase H (Agrobacterium fabrum (strain C58 / ATCC 33970) (Agrobacterium tumefaciens (strain C58))).